The chain runs to 851 residues: DNA mismatch repair protein MutS (851 aa).

614–621 (GPNMGGKS) provides a ligand contact to ATP.

Belongs to the DNA mismatch repair MutS family.

In terms of biological role, this protein is involved in the repair of mismatches in DNA. It is possible that it carries out the mismatch recognition step. This protein has a weak ATPase activity. The protein is DNA mismatch repair protein MutS of Yersinia enterocolitica serotype O:8 / biotype 1B (strain NCTC 13174 / 8081).